A 222-amino-acid chain; its full sequence is Ribosomal RNA large subunit methyltransferase E (222 aa).

Positions Met-1–Lys-13 are enriched in basic and acidic residues. Residues Met-1–Ser-22 form a disordered region. S-adenosyl-L-methionine is bound by residues Gly-75, Trp-77, Asp-94, Asp-110, and Asp-134. Lys-174 functions as the Proton acceptor in the catalytic mechanism.

This sequence belongs to the class I-like SAM-binding methyltransferase superfamily. RNA methyltransferase RlmE family.

The protein resides in the cytoplasm. The catalysed reaction is uridine(2552) in 23S rRNA + S-adenosyl-L-methionine = 2'-O-methyluridine(2552) in 23S rRNA + S-adenosyl-L-homocysteine + H(+). Functionally, specifically methylates the uridine in position 2552 of 23S rRNA at the 2'-O position of the ribose in the fully assembled 50S ribosomal subunit. In Novosphingobium aromaticivorans (strain ATCC 700278 / DSM 12444 / CCUG 56034 / CIP 105152 / NBRC 16084 / F199), this protein is Ribosomal RNA large subunit methyltransferase E.